A 264-amino-acid polypeptide reads, in one-letter code: Acyl-[acyl-carrier-protein]--UDP-N-acetylglucosamine O-acyltransferase (264 aa).

This sequence belongs to the transferase hexapeptide repeat family. LpxA subfamily. In terms of assembly, homotrimer.

It localises to the cytoplasm. The catalysed reaction is a (3R)-hydroxyacyl-[ACP] + UDP-N-acetyl-alpha-D-glucosamine = a UDP-3-O-[(3R)-3-hydroxyacyl]-N-acetyl-alpha-D-glucosamine + holo-[ACP]. It functions in the pathway glycolipid biosynthesis; lipid IV(A) biosynthesis; lipid IV(A) from (3R)-3-hydroxytetradecanoyl-[acyl-carrier-protein] and UDP-N-acetyl-alpha-D-glucosamine: step 1/6. Functionally, involved in the biosynthesis of lipid A, a phosphorylated glycolipid that anchors the lipopolysaccharide to the outer membrane of the cell. The chain is Acyl-[acyl-carrier-protein]--UDP-N-acetylglucosamine O-acyltransferase from Haemophilus ducreyi (strain 35000HP / ATCC 700724).